The sequence spans 298 residues: Acetyl-coenzyme A carboxylase carboxyl transferase subunit beta (298 aa).

The interval 1-21 is disordered; sequence MNQEVKSGKVLSPSTPWTQRP. Residues 20–67 form a C4-type zinc finger; the sequence is RPVPGIEVADEQQTLKATFTEPTIECPECHALVTRTAISFNAYVCPQC. Residues 41–298 form the CoA carboxyltransferase N-terminal domain; it reads PTIECPECHA…RLVSKLMNLP (258 aa). 4 residues coordinate Zn(2+): Cys45, Cys48, Cys64, and Cys67.

This sequence belongs to the AccD/PCCB family. In terms of assembly, acetyl-CoA carboxylase is a heterohexamer composed of biotin carboxyl carrier protein (AccB), biotin carboxylase (AccC) and two subunits each of ACCase subunit alpha (AccA) and ACCase subunit beta (AccD). It depends on Zn(2+) as a cofactor.

It localises to the cytoplasm. The enzyme catalyses N(6)-carboxybiotinyl-L-lysyl-[protein] + acetyl-CoA = N(6)-biotinyl-L-lysyl-[protein] + malonyl-CoA. It participates in lipid metabolism; malonyl-CoA biosynthesis; malonyl-CoA from acetyl-CoA: step 1/1. In terms of biological role, component of the acetyl coenzyme A carboxylase (ACC) complex. Biotin carboxylase (BC) catalyzes the carboxylation of biotin on its carrier protein (BCCP) and then the CO(2) group is transferred by the transcarboxylase to acetyl-CoA to form malonyl-CoA. This chain is Acetyl-coenzyme A carboxylase carboxyl transferase subunit beta, found in Acinetobacter baumannii (strain SDF).